A 488-amino-acid chain; its full sequence is Katanin p60 ATPase-containing subunit A-like 1 (488 aa).

Met1 bears the N-acetylmethionine mark. The interval 95-179 is disordered; that stretch reads DPAVWPPPVP…GASDSEIPKF (85 aa). Positions 116-127 are enriched in basic and acidic residues; sequence PNREVRPLRKDV. The segment covering 128–138 has biased composition (low complexity); sequence GAGARGLVGRA. Residues 142 to 167 show a composition bias toward basic and acidic residues; sequence SKSDKPASRDKDYRARGRDDKARKNV. At Ser172 the chain carries Phosphoserine. An ATP-binding site is contributed by 246–253; it reads GPPGTGKT.

Belongs to the AAA ATPase family. Katanin p60 subunit A1 subfamily. A-like 1 sub-subfamily. In terms of assembly, interacts with KATNB1 and KATNBL1. As to expression, widely expressed, including in testis, brain, heart, lung, kidney, liver, spleen, seminal vesicles and ovary. In testis, restricted to Sertoli cells within the seminiferous epithelium (at protein level).

Its subcellular location is the cytoplasm. The protein resides in the cytoskeleton. The protein localises to the spindle pole. It localises to the spindle. It catalyses the reaction n ATP + n H2O + a microtubule = n ADP + n phosphate + (n+1) alpha/beta tubulin heterodimers.. Its function is as follows. Regulates microtubule dynamics in Sertoli cells, a process that is essential for spermiogenesis and male fertility. Severs microtubules in an ATP-dependent manner, promoting rapid reorganization of cellular microtubule arrays. Has microtubule-severing activity in vitro. This is Katanin p60 ATPase-containing subunit A-like 1 (Katnal1) from Mus musculus (Mouse).